The following is a 473-amino-acid chain: Serine palmitoyltransferase 1 (473 aa).

Topologically, residues 1-15 (MATVAEQWVLVEMVQ) are lumenal. Positions 1 to 66 (MATVAEQWVL…KEELIEEWQP (66 aa)) are interaction with SPTLC2. A helical transmembrane segment spans residues 16 to 36 (ALYEAPAYHLILEGILILWII). Residues 37–473 (RLVFSKTYKL…IREAAQAVLL (437 aa)) are Cytoplasmic-facing. A Phosphotyrosine; by ABL modification is found at Tyr164.

It belongs to the class-II pyridoxal-phosphate-dependent aminotransferase family. As to quaternary structure, component of the serine palmitoyltransferase (SPT) complex, which is also composed of SPTLC2 or SPTLC3 and SPTSSA or SPTSSB. The heterodimer with SPTLC2 or SPTLC3 forms the catalytic core of the enzyme, while SPTSSA or SPTSSB subunits determine substrate specificity. SPT also interacts with ORMDL proteins, especially ORMDL3, which negatively regulate SPT activity in the presence of ceramides. Forms dimers of heterodimers with SPTLC2. Interacts with RTN4 (isoform B). It depends on pyridoxal 5'-phosphate as a cofactor. In terms of processing, phosphorylation at Tyr-164 inhibits activity and promotes cell survival. As to expression, expressed in astrocytes.

It is found in the endoplasmic reticulum membrane. It carries out the reaction L-serine + hexadecanoyl-CoA + H(+) = 3-oxosphinganine + CO2 + CoA. It catalyses the reaction octadecanoyl-CoA + L-serine + H(+) = 3-oxoeicosasphinganine + CO2 + CoA. The catalysed reaction is tetradecanoyl-CoA + L-serine + H(+) = 3-oxohexadecasphinganine + CO2 + CoA. The enzyme catalyses dodecanoyl-CoA + L-serine + H(+) = 3-oxotetradecasphinganine + CO2 + CoA. It functions in the pathway lipid metabolism; sphingolipid metabolism. With respect to regulation, SPT complex catalytic activity is negatively regulated by ORMDL proteins, including ORMDL3, in the presence of ceramides. This mechanism allows to maintain ceramide levels at sufficient concentrations for the production of complex sphingolipids, but which prevents the accumulation of ceramides to levels that trigger apoptosis. Its function is as follows. Component of the serine palmitoyltransferase multisubunit enzyme (SPT) that catalyzes the initial and rate-limiting step in sphingolipid biosynthesis by condensing L-serine and activated acyl-CoA (most commonly palmitoyl-CoA) to form long-chain bases. The SPT complex is also composed of SPTLC2 or SPTLC3 and SPTSSA or SPTSSB. Within this complex, the heterodimer with SPTLC2 or SPTLC3 forms the catalytic core. The composition of the serine palmitoyltransferase (SPT) complex determines the substrate preference. The SPTLC1-SPTLC2-SPTSSA complex shows a strong preference for C16-CoA substrate, while the SPTLC1-SPTLC3-SPTSSA isozyme uses both C14-CoA and C16-CoA as substrates, with a slight preference for C14-CoA. The SPTLC1-SPTLC2-SPTSSB complex shows a strong preference for C18-CoA substrate, while the SPTLC1-SPTLC3-SPTSSB isozyme displays an ability to use a broader range of acyl-CoAs, without apparent preference. Required for adipocyte cell viability and metabolic homeostasis. In Rattus norvegicus (Rat), this protein is Serine palmitoyltransferase 1.